The following is a 141-amino-acid chain: Hemoglobin subunit alpha (141 aa).

Positions 1-141 (VLSAADKGNV…VSTVLTSKYR (141 aa)) constitute a Globin domain. Residue Ser-3 is modified to Phosphoserine. 2 positions are modified to N6-succinyllysine: Lys-7 and Lys-11. An N6-acetyllysine; alternate modification is found at Lys-16. N6-succinyllysine; alternate is present on Lys-16. Tyr-24 bears the Phosphotyrosine mark. Ser-35 is subject to Phosphoserine. Residue Lys-40 is modified to N6-succinyllysine. His-58 is a binding site for O2. His-87 is a binding site for heme b. The residue at position 102 (Ser-102) is a Phosphoserine. Thr-108 carries the phosphothreonine modification. Phosphoserine is present on residues Ser-124 and Ser-131. Phosphothreonine is present on residues Thr-134 and Thr-137. Ser-138 is modified (phosphoserine).

The protein belongs to the globin family. As to quaternary structure, heterotetramer of two alpha chains and two beta chains. Red blood cells.

Its function is as follows. Involved in oxygen transport from the lung to the various peripheral tissues. Functionally, hemopressin acts as an antagonist peptide of the cannabinoid receptor CNR1. Hemopressin-binding efficiently blocks cannabinoid receptor CNR1 and subsequent signaling. This chain is Hemoglobin subunit alpha (HBA), found in Macrotus californicus (Californian leaf-nosed bat).